A 366-amino-acid chain; its full sequence is S-adenosylmethionine:tRNA ribosyltransferase-isomerase (366 aa).

The protein belongs to the QueA family. Monomer.

The protein localises to the cytoplasm. It carries out the reaction 7-aminomethyl-7-carbaguanosine(34) in tRNA + S-adenosyl-L-methionine = epoxyqueuosine(34) in tRNA + adenine + L-methionine + 2 H(+). The protein operates within tRNA modification; tRNA-queuosine biosynthesis. Transfers and isomerizes the ribose moiety from AdoMet to the 7-aminomethyl group of 7-deazaguanine (preQ1-tRNA) to give epoxyqueuosine (oQ-tRNA). The chain is S-adenosylmethionine:tRNA ribosyltransferase-isomerase from Synechococcus sp. (strain CC9605).